The sequence spans 182 residues: Ribosome-recycling factor (182 aa).

This sequence belongs to the RRF family.

The protein localises to the cytoplasm. Responsible for the release of ribosomes from messenger RNA at the termination of protein biosynthesis. May increase the efficiency of translation by recycling ribosomes from one round of translation to another. The sequence is that of Ribosome-recycling factor from Prochlorococcus marinus (strain MIT 9215).